The primary structure comprises 393 residues: Probable tRNA sulfurtransferase (393 aa).

In terms of domain architecture, THUMP spans 61–168 (DEVIESLTRV…GDVINIYSIE (108 aa)). Residues 186-187 (LL), 211-212 (YF), R268, G290, and Q299 contribute to the ATP site.

The protein belongs to the ThiI family.

It is found in the cytoplasm. It catalyses the reaction [ThiI sulfur-carrier protein]-S-sulfanyl-L-cysteine + a uridine in tRNA + 2 reduced [2Fe-2S]-[ferredoxin] + ATP + H(+) = [ThiI sulfur-carrier protein]-L-cysteine + a 4-thiouridine in tRNA + 2 oxidized [2Fe-2S]-[ferredoxin] + AMP + diphosphate. It carries out the reaction [ThiS sulfur-carrier protein]-C-terminal Gly-Gly-AMP + S-sulfanyl-L-cysteinyl-[cysteine desulfurase] + AH2 = [ThiS sulfur-carrier protein]-C-terminal-Gly-aminoethanethioate + L-cysteinyl-[cysteine desulfurase] + A + AMP + 2 H(+). It functions in the pathway cofactor biosynthesis; thiamine diphosphate biosynthesis. Its function is as follows. Catalyzes the ATP-dependent transfer of a sulfur to tRNA to produce 4-thiouridine in position 8 of tRNAs, which functions as a near-UV photosensor. Also catalyzes the transfer of sulfur to the sulfur carrier protein ThiS, forming ThiS-thiocarboxylate. This is a step in the synthesis of thiazole, in the thiamine biosynthesis pathway. The sulfur is donated as persulfide by IscS. In Lachnospira eligens (strain ATCC 27750 / DSM 3376 / VPI C15-48 / C15-B4) (Eubacterium eligens), this protein is Probable tRNA sulfurtransferase.